Consider the following 350-residue polypeptide: Glycerol-3-phosphate dehydrogenase [NAD(+)], cytoplasmic (350 aa).

NAD(+) is bound by residues 11-16 (GSGNWG), F98, K121, and A155. K121 contacts substrate. K206 functions as the Proton acceptor in the catalytic mechanism. 2 residues coordinate NAD(+): R270 and Q299. A substrate-binding site is contributed by 270–271 (RN).

It belongs to the NAD-dependent glycerol-3-phosphate dehydrogenase family. In terms of assembly, homodimer.

Its subcellular location is the cytoplasm. The catalysed reaction is sn-glycerol 3-phosphate + NAD(+) = dihydroxyacetone phosphate + NADH + H(+). It functions in the pathway phospholipid metabolism; alpha-glycerophosphate cycle. This chain is Glycerol-3-phosphate dehydrogenase [NAD(+)], cytoplasmic (Gpdh1), found in Drosophila ezoana (Fruit fly).